The primary structure comprises 584 residues: Isopropyl malate synthase htyA (584 aa).

Positions 39 to 317 constitute a Pyruvate carboxyltransferase domain; sequence PIWLSTDLRD…ETGLDFSNLP (279 aa).

Belongs to the alpha-IPM synthase/homocitrate synthase family. LeuA type 2 subfamily.

It catalyses the reaction 3-methyl-2-oxobutanoate + acetyl-CoA + H2O = (2S)-2-isopropylmalate + CoA + H(+). It functions in the pathway antifungal biosynthesis. Its function is as follows. Isopropyl malate synthase; part of the gene cluster that mediates the de novo generation of L-homotyrosine from acetyl-CoA and 4-hydroxyphenyl-pyruvate. L-homotyrosine is a building block of echinocandin B, a fungal lipidated cyclic hexapeptide that acts as an antifungal agent. L-homotyrosine 4-hydroxyphenyl-pyruvate first undergoes an aldol-type condensation by htyA with the C-2 of acetyl-CoA followed by the release of CoA to form 2-(4-hydroxybenzyl)-malate. This is followed by isomerization of 2-(4-hydroxy-benzyl)-malate to 3-(4-hydroxybenzyl)-malate by htyD. Thereafter, 3-(4-hydroxybenzyl)-malate undergoes decarboxylation and oxidation to form 2-oxo-4-(4-hydroxybenzyl)butanoic acid, coupled to reduction of NAD(+) to NADH by htyC. The product then undergoes transamination catalyzed by htyB to form L-homotyrosine. The protein is Isopropyl malate synthase htyA of Aspergillus rugulosus (Emericella rugulosa).